A 551-amino-acid polypeptide reads, in one-letter code: CTP synthase (551 aa).

Residues 1–273 (MKNTTNTKRT…DSKILELLNI (273 aa)) are amidoligase domain. S21 serves as a coordination point for CTP. UTP is bound at residue S21. ATP-binding positions include 22 to 27 (SLGKGL) and D79. The Mg(2+) site is built by D79 and E147. CTP contacts are provided by residues 154 to 156 (DIE), 194 to 199 (KTKPTQ), and K230. UTP is bound by residues 194-199 (KTKPTQ) and K230. The Glutamine amidotransferase type-1 domain maps to 298-551 (TIAITGKYVD…ISAAVANKKG (254 aa)). G360 lines the L-glutamine pocket. The Nucleophile; for glutamine hydrolysis role is filled by C387. L-glutamine-binding positions include 388–391 (LGMQ), E411, and R479. Residues H524 and E526 contribute to the active site.

This sequence belongs to the CTP synthase family. As to quaternary structure, homotetramer.

It catalyses the reaction UTP + L-glutamine + ATP + H2O = CTP + L-glutamate + ADP + phosphate + 2 H(+). The catalysed reaction is L-glutamine + H2O = L-glutamate + NH4(+). The enzyme catalyses UTP + NH4(+) + ATP = CTP + ADP + phosphate + 2 H(+). It participates in pyrimidine metabolism; CTP biosynthesis via de novo pathway; CTP from UDP: step 2/2. Allosterically activated by GTP, when glutamine is the substrate; GTP has no effect on the reaction when ammonia is the substrate. The allosteric effector GTP functions by stabilizing the protein conformation that binds the tetrahedral intermediate(s) formed during glutamine hydrolysis. Inhibited by the product CTP, via allosteric rather than competitive inhibition. Its function is as follows. Catalyzes the ATP-dependent amination of UTP to CTP with either L-glutamine or ammonia as the source of nitrogen. Regulates intracellular CTP levels through interactions with the four ribonucleotide triphosphates. The polypeptide is CTP synthase (Desulfotalea psychrophila (strain LSv54 / DSM 12343)).